Consider the following 147-residue polypeptide: Ubiquitin-conjugating enzyme E2 D2 (147 aa).

Positions 1 to 147 constitute a UBC core domain; it reads MALKRIHKEL…AREWTQKYAM (147 aa). The active-site Glycyl thioester intermediate is the Cys-85.

It belongs to the ubiquitin-conjugating enzyme family. As to quaternary structure, interacts with SCF (SKP1-CUL1-F-box protein) E3 ubiquitin ligase complex. Interacts with CNOT4 (via RING domain). Interacts with E3 ubiquitin-protein ligases CBLC, PJA1 and PJA2. Interacts with PDZRN3. Interacts with PPP1R11. Interacts with E3 ubiquitin-protein ligase PHF7; the interaction inhibits cleavage of PHF7 and promotes association of the complex with the nucleosome core particle.

It carries out the reaction S-ubiquitinyl-[E1 ubiquitin-activating enzyme]-L-cysteine + [E2 ubiquitin-conjugating enzyme]-L-cysteine = [E1 ubiquitin-activating enzyme]-L-cysteine + S-ubiquitinyl-[E2 ubiquitin-conjugating enzyme]-L-cysteine.. It catalyses the reaction S-ubiquitinyl-[E1 ubiquitin-activating enzyme]-L-cysteine + [acceptor protein]-L-lysine = [E1 ubiquitin-activating enzyme]-L-cysteine + N(6)-monoubiquitinyl-[acceptor protein]-L-lysine.. It functions in the pathway protein modification; protein ubiquitination. In terms of biological role, accepts ubiquitin from the E1 complex and catalyzes its covalent attachment to other proteins. In vitro catalyzes 'Lys-48'-linked polyubiquitination. Mediates the selective degradation of short-lived and abnormal proteins. Functions in the E6/E6-AP-induced ubiquitination of p53/TP53. Mediates ubiquitination of PEX5 and SQSTM1 and autoubiquitination of STUB1 and TRAF6. Involved in the signal-induced conjugation and subsequent degradation of NFKBIA, FBXW2-mediated GCM1 ubiquitination and degradation, MDM2-dependent degradation of p53/TP53 and the activation of MAVS in the mitochondria by RIGI in response to viral infection. Essential for viral activation of IRF3. The protein is Ubiquitin-conjugating enzyme E2 D2 (UBE2D2) of Bos taurus (Bovine).